A 528-amino-acid polypeptide reads, in one-letter code: Chaperonin GroEL, chloroplastic (528 aa).

Residues Thr29–Pro32, Asp86–Thr90, Gly415, Asn481–Ala483, and Asp497 contribute to the ATP site.

This sequence belongs to the chaperonin (HSP60) family. In terms of assembly, forms a cylinder of 14 subunits composed of two heptameric rings stacked back-to-back. Interacts with the co-chaperonin GroES.

The protein resides in the plastid. The protein localises to the chloroplast. The catalysed reaction is ATP + H2O + a folded polypeptide = ADP + phosphate + an unfolded polypeptide.. Together with its co-chaperonin GroES, plays an essential role in assisting protein folding. The GroEL-GroES system forms a nano-cage that allows encapsulation of the non-native substrate proteins and provides a physical environment optimized to promote and accelerate protein folding. In Trieres chinensis (Marine centric diatom), this protein is Chaperonin GroEL, chloroplastic.